Consider the following 676-residue polypeptide: DNA ligase (676 aa).

NAD(+)-binding positions include 35–39 (DAEYD), 84–85 (SL), and glutamate 118. Residue lysine 120 is the N6-AMP-lysine intermediate of the active site. Residues arginine 141, glutamate 176, lysine 284, and lysine 308 each coordinate NAD(+). Zn(2+)-binding residues include cysteine 402, cysteine 405, cysteine 420, and cysteine 426. Residues 595–676 (SYLSLIHGKI…WLQYTQSSEN (82 aa)) form the BRCT domain.

The protein belongs to the NAD-dependent DNA ligase family. LigA subfamily. Mg(2+) is required as a cofactor. Requires Mn(2+) as cofactor.

It catalyses the reaction NAD(+) + (deoxyribonucleotide)n-3'-hydroxyl + 5'-phospho-(deoxyribonucleotide)m = (deoxyribonucleotide)n+m + AMP + beta-nicotinamide D-nucleotide.. In terms of biological role, DNA ligase that catalyzes the formation of phosphodiester linkages between 5'-phosphoryl and 3'-hydroxyl groups in double-stranded DNA using NAD as a coenzyme and as the energy source for the reaction. It is essential for DNA replication and repair of damaged DNA. This Ehrlichia chaffeensis (strain ATCC CRL-10679 / Arkansas) protein is DNA ligase.